Consider the following 209-residue polypeptide: Ribosomal RNA large subunit methyltransferase E (209 aa).

5 residues coordinate S-adenosyl-L-methionine: glycine 63, tryptophan 65, aspartate 83, aspartate 99, and aspartate 124. The active-site Proton acceptor is the lysine 164.

It belongs to the class I-like SAM-binding methyltransferase superfamily. RNA methyltransferase RlmE family.

Its subcellular location is the cytoplasm. It carries out the reaction uridine(2552) in 23S rRNA + S-adenosyl-L-methionine = 2'-O-methyluridine(2552) in 23S rRNA + S-adenosyl-L-homocysteine + H(+). Specifically methylates the uridine in position 2552 of 23S rRNA at the 2'-O position of the ribose in the fully assembled 50S ribosomal subunit. The polypeptide is Ribosomal RNA large subunit methyltransferase E (Escherichia coli O81 (strain ED1a)).